The primary structure comprises 516 residues: Maturase K (516 aa).

This sequence belongs to the intron maturase 2 family. MatK subfamily.

The protein resides in the plastid. Its subcellular location is the chloroplast. Its function is as follows. Usually encoded in the trnK tRNA gene intron. Probably assists in splicing its own and other chloroplast group II introns. The protein is Maturase K of Chara connivens (Convergent stonewort).